The following is a 37-amino-acid chain: Cytochrome b6-f complex subunit 5 (37 aa).

A helical transmembrane segment spans residues 5-25 (LLSGVVLGLILVTLSGLFFAA).

It belongs to the PetG family. As to quaternary structure, the 4 large subunits of the cytochrome b6-f complex are cytochrome b6, subunit IV (17 kDa polypeptide, PetD), cytochrome f and the Rieske protein, while the 4 small subunits are PetG, PetL, PetM and PetN. The complex functions as a dimer.

It localises to the cellular thylakoid membrane. Functionally, component of the cytochrome b6-f complex, which mediates electron transfer between photosystem II (PSII) and photosystem I (PSI), cyclic electron flow around PSI, and state transitions. PetG is required for either the stability or assembly of the cytochrome b6-f complex. The chain is Cytochrome b6-f complex subunit 5 from Trichodesmium erythraeum (strain IMS101).